Consider the following 965-residue polypeptide: Valine--tRNA ligase (965 aa).

A compositionally biased stretch (polar residues) spans 1–12 (MEKTPATQTQAE). The tract at residues 1–23 (MEKTPATQTQAEPSLDKTYNPKE) is disordered. A 'HIGH' region motif is present at residues 56–66 (PNVTGSLHMGH). The 'KMSKS' region signature appears at 568 to 572 (KMSKS). Lysine 571 is a binding site for ATP. The stretch at 893–960 (MAGLVDKEAE…SKEKLLAQKE (68 aa)) forms a coiled coil.

It belongs to the class-I aminoacyl-tRNA synthetase family. ValS type 1 subfamily. As to quaternary structure, monomer.

Its subcellular location is the cytoplasm. The catalysed reaction is tRNA(Val) + L-valine + ATP = L-valyl-tRNA(Val) + AMP + diphosphate. In terms of biological role, catalyzes the attachment of valine to tRNA(Val). As ValRS can inadvertently accommodate and process structurally similar amino acids such as threonine, to avoid such errors, it has a 'posttransfer' editing activity that hydrolyzes mischarged Thr-tRNA(Val) in a tRNA-dependent manner. This chain is Valine--tRNA ligase, found in Photorhabdus laumondii subsp. laumondii (strain DSM 15139 / CIP 105565 / TT01) (Photorhabdus luminescens subsp. laumondii).